Reading from the N-terminus, the 517-residue chain is Acetylcholine receptor subunit gamma (517 aa).

Residues 1–22 (MHGGQGPLLLLLLLAVCLGAQG) form the signal peptide. At 23–240 (RNQEERLLAD…VVFYLLIQRK (218 aa)) the chain is on the extracellular side. N-linked (GlcNAc...) asparagine glycans are attached at residues N52 and N163. Cysteines 150 and 164 form a disulfide. Helical transmembrane passes span 241 to 265 (PLFYVINIIAPCVLISSVAILIHFL), 275 to 293 (TVAINVLLAQTVFLFLVAK), and 309 to 330 (LTFLLVVTILIVVNAVVVLNVS). Residues 331–474 (LRSPHTHSMA…WFLVGRVLDR (144 aa)) are Cytoplasmic-facing. The helical transmembrane segment at 475–495 (VCFLAMLSLFICGTAGIFLMA) threads the bilayer.

This sequence belongs to the ligand-gated ion channel (TC 1.A.9) family. Acetylcholine receptor (TC 1.A.9.1) subfamily. Gamma/CHRNG sub-subfamily. In terms of assembly, pentamer of two alpha chains, and one each of the beta, delta, and gamma (in immature muscle) or epsilon (in mature muscle) chains.

It is found in the postsynaptic cell membrane. The protein resides in the cell membrane. The enzyme catalyses K(+)(in) = K(+)(out). The catalysed reaction is Na(+)(in) = Na(+)(out). In terms of biological role, after binding acetylcholine, the AChR responds by an extensive change in conformation that affects all subunits and leads to opening of an ion-conducting channel across the plasma membrane. This Homo sapiens (Human) protein is Acetylcholine receptor subunit gamma.